We begin with the raw amino-acid sequence, 817 residues long: Putative ATP-dependent RNA helicase R350 (817 aa).

A disordered region spans residues 1-29 (MNRRNRSNDLNPEPSIENPNNQIAEEFPG). Over residues 17–29 (ENPNNQIAEEFPG) the composition is skewed to polar residues. The region spanning 93–271 (LNPQGPYTSI…ALMFNLLRPG (179 aa)) is the Helicase ATP-binding domain. Position 106–113 (106–113 (HGLGSGKT)) interacts with ATP. A DEAH box motif is present at residues 206–209 (DEAH). Positions 495 to 661 (LAIAFMTYIS…STDEYVEDQA (167 aa)) constitute a Helicase C-terminal domain.

The protein belongs to the DEAD box helicase family. DEAH subfamily.

It localises to the virion. The catalysed reaction is ATP + H2O = ADP + phosphate + H(+). The chain is Putative ATP-dependent RNA helicase R350 from Acanthamoeba polyphaga mimivirus (APMV).